We begin with the raw amino-acid sequence, 405 residues long: uncharacterized protein (405 aa).

12 helical membrane passes run 19 to 39 (IVSIVMFNFASYLTIGLPLAV), 48 to 68 (MGFSAFWAGLIISLQYFATLL), 85 to 105 (IVVFGLCGCFLSGLGYLLADI), 129 to 149 (SFAGTGSTLWGVGVVGSLHIG), 156 to 176 (GIVTYGAMAMGAPLGVLCYAW), 178 to 198 (GLQGLALTVMGVALLAVLLAL), 224 to 244 (GMALALASAGFGVIATFITLF), 252 to 272 (GAAFALTLFSVAFVGTRLLFP), 283 to 303 (VAMICFGVEIIGLLLVGTAAM), 309 to 329 (IGVLLTGMGFSLVFPALGVVA), 344 to 364 (TYTVFMDMSLGVTGPLAGLVM), and 366 to 386 (WAGVPVIYLAAAGLVAMALLL).

It belongs to the major facilitator superfamily. YhhS family.

The protein resides in the cell inner membrane. This is an uncharacterized protein from Salmonella typhi.